The chain runs to 215 residues: 3-demethoxyubiquinol 3-hydroxylase (215 aa).

Fe cation contacts are provided by Glu64, Glu94, His97, Glu146, Glu178, and His181.

This sequence belongs to the COQ7 family. Fe cation is required as a cofactor.

It localises to the cell membrane. It catalyses the reaction a 5-methoxy-2-methyl-3-(all-trans-polyprenyl)benzene-1,4-diol + AH2 + O2 = a 3-demethylubiquinol + A + H2O. The protein operates within cofactor biosynthesis; ubiquinone biosynthesis. In terms of biological role, catalyzes the hydroxylation of 2-nonaprenyl-3-methyl-6-methoxy-1,4-benzoquinol during ubiquinone biosynthesis. The chain is 3-demethoxyubiquinol 3-hydroxylase from Coxiella burnetii (strain Dugway 5J108-111).